The primary structure comprises 757 residues: Double zinc ribbon and ankyrin repeat-containing protein 1 (757 aa).

2 DZANK-type zinc fingers span residues 230 to 290 and 359 to 407; these read CAHC…VVCE and CSRC…GSCG. ANK repeat units lie at residues 631–662 and 666–695; these read ENRL…DPNC and QGRP…DIDQ.

As to quaternary structure, interacts with NINL. Associates with DYNC1H1 and multiple dynein intermediate and light chains as well as actin-binding proteins. In terms of tissue distribution, expressed in retina.

It is found in the cell projection. It localises to the cilium. In terms of biological role, involved in vesicle transport in photoreceptor cells. The polypeptide is Double zinc ribbon and ankyrin repeat-containing protein 1 (Rattus norvegicus (Rat)).